Reading from the N-terminus, the 949-residue chain is Bifunctional uridylyltransferase/uridylyl-removing enzyme (949 aa).

The tract at residues 1–377 (MARHETSFPE…RFRNRVRKIP (377 aa)) is uridylyltransferase. The interval 378–733 (GTLDFVDDGG…VRTHDFHAIT (356 aa)) is uridylyl-removing. Residues 494-610 (VDEHLLRAVD…VDFAERVQSL (117 aa)) enclose the HD domain. ACT domains lie at 734–815 (EITV…DVIA) and 845–926 (VIEV…ERMP). A disordered region spans residues 925-949 (MPSGIIAPTPVPRASHGSKATKAET).

This sequence belongs to the GlnD family. Mg(2+) serves as cofactor.

It carries out the reaction [protein-PII]-L-tyrosine + UTP = [protein-PII]-uridylyl-L-tyrosine + diphosphate. The catalysed reaction is [protein-PII]-uridylyl-L-tyrosine + H2O = [protein-PII]-L-tyrosine + UMP + H(+). Uridylyltransferase (UTase) activity is inhibited by glutamine, while glutamine activates uridylyl-removing (UR) activity. Functionally, modifies, by uridylylation and deuridylylation, the PII regulatory proteins (GlnB and homologs), in response to the nitrogen status of the cell that GlnD senses through the glutamine level. Under low glutamine levels, catalyzes the conversion of the PII proteins and UTP to PII-UMP and PPi, while under higher glutamine levels, GlnD hydrolyzes PII-UMP to PII and UMP (deuridylylation). Thus, controls uridylylation state and activity of the PII proteins, and plays an important role in the regulation of nitrogen fixation and metabolism. This Sinorhizobium medicae (strain WSM419) (Ensifer medicae) protein is Bifunctional uridylyltransferase/uridylyl-removing enzyme.